The following is a 463-amino-acid chain: L-seryl-tRNA(Sec) selenium transferase (463 aa).

At Lys295 the chain carries N6-(pyridoxal phosphate)lysine.

This sequence belongs to the SelA family. As to quaternary structure, homodecamer; pentamer of dimers. Binds only one seryl-tRNA(Sec) per dimer. Pyridoxal 5'-phosphate is required as a cofactor.

It is found in the cytoplasm. The catalysed reaction is L-seryl-tRNA(Sec) + selenophosphate + H(+) = L-selenocysteinyl-tRNA(Sec) + phosphate. It participates in aminoacyl-tRNA biosynthesis; selenocysteinyl-tRNA(Sec) biosynthesis; selenocysteinyl-tRNA(Sec) from L-seryl-tRNA(Sec) (bacterial route): step 1/1. Functionally, converts seryl-tRNA(Sec) to selenocysteinyl-tRNA(Sec) required for selenoprotein biosynthesis. The protein is L-seryl-tRNA(Sec) selenium transferase of Photorhabdus laumondii subsp. laumondii (strain DSM 15139 / CIP 105565 / TT01) (Photorhabdus luminescens subsp. laumondii).